The chain runs to 133 residues: Transcription antitermination protein NusB (133 aa).

Belongs to the NusB family.

Involved in transcription antitermination. Required for transcription of ribosomal RNA (rRNA) genes. Binds specifically to the boxA antiterminator sequence of the ribosomal RNA (rrn) operons. In Clostridium novyi (strain NT), this protein is Transcription antitermination protein NusB.